The following is a 327-amino-acid chain: 2-oxoisovalerate dehydrogenase subunit beta (327 aa).

Residues E29, 58–60 (LAE), Q82, and 86–89 (FIMP) contribute to the thiamine diphosphate site. Residues 83–86 (FADF) and H129 contribute to the substrate site. The Proton acceptor role is filled by H129.

In terms of assembly, heterotetramer of two alpha and two beta chains. Directly associated with ODBA in the E1 complex. The cofactor is thiamine diphosphate.

It carries out the reaction N(6)-[(R)-lipoyl]-L-lysyl-[protein] + 3-methyl-2-oxobutanoate + H(+) = N(6)-[(R)-S(8)-2-methylpropanoyldihydrolipoyl]-L-lysyl-[protein] + CO2. Functionally, the branched-chain alpha-keto dehydrogenase complex catalyzes the overall conversion of alpha-keto acids to acyl-CoA and CO(2). It contains multiple copies of three enzymatic components: branched-chain alpha-keto acid decarboxylase (E1), lipoamide acyltransferase (E2) and lipoamide dehydrogenase (E3). In Bacillus subtilis (strain 168), this protein is 2-oxoisovalerate dehydrogenase subunit beta (bfmBAB).